The sequence spans 455 residues: Golgi pH regulator (455 aa).

A run of 2 helical transmembrane segments spans residues 5-25 (ADSV…WLFF) and 46-66 (VTFA…LGLL). Asparagine 67 carries an N-linked (GlcNAc...) asparagine glycan. 3 consecutive transmembrane segments (helical) span residues 79–99 (LCVI…YFVV), 111–131 (LFSC…GDPF), and 150–170 (VGVI…VNCP). N-linked (GlcNAc...) asparagine glycosylation occurs at asparagine 180. The next 4 helical transmembrane spans lie at 290-310 (GYFF…NIVF), 343-363 (ISFI…LITL), 378-398 (VIVL…VLLI), and 425-445 (WFDV…YLAH).

It belongs to the Golgi pH regulator (TC 1.A.38) family. As to quaternary structure, homotrimer.

Its subcellular location is the golgi apparatus membrane. The enzyme catalyses iodide(out) = iodide(in). It carries out the reaction chloride(in) = chloride(out). It catalyses the reaction bromide(in) = bromide(out). The catalysed reaction is fluoride(in) = fluoride(out). Its function is as follows. Voltage-gated channel that enables the transfer of anions such as iodide, chloride, bromide and fluoride which may function in counter-ion conductance and participates in Golgi acidification. This chain is Golgi pH regulator (gpr89-b), found in Xenopus laevis (African clawed frog).